We begin with the raw amino-acid sequence, 111 residues long: Large ribosomal subunit protein P1 (111 aa).

The disordered stretch occupies residues alanine 75–phenylalanine 111. Acidic residues predominate over residues lysine 88 to aspartate 101.

This sequence belongs to the eukaryotic ribosomal protein P1/P2 family. In terms of assembly, part of the 50S ribosomal subunit. Homodimer, it forms part of the ribosomal stalk which helps the ribosome interact with GTP-bound translation factors. Forms a heptameric uL10/P0(P1)2(P1)2(P1)2 complex, where uL10/P0 forms an elongated spine to which the P1 dimers bind in a sequential fashion.

Functionally, forms part of the ribosomal stalk, playing a central role in the interaction of the ribosome with GTP-bound translation factors. The chain is Large ribosomal subunit protein P1 from Aeropyrum pernix (strain ATCC 700893 / DSM 11879 / JCM 9820 / NBRC 100138 / K1).